Consider the following 502-residue polypeptide: Sodium/proline symporter (502 aa).

Residues 1–5 lie on the Periplasmic side of the membrane; sequence MAIST. A helical transmembrane segment spans residues 6–26; that stretch reads PMLVTFCVYIFGMILIGFIAW. Over 27 to 41 the chain is Cytoplasmic; that stretch reads RSTKNFDDYILGGRS. Hydrophilic stretches follow at residues 27 to 66 and 88 to 124; these read RSTK…GLPG and INWK…KSRI. A helical membrane pass occupies residues 42–62; the sequence is LGPFVTALSAGASDMSGWLLM. The Periplasmic portion of the chain corresponds to 63-67; it reads GLPGA. A helical membrane pass occupies residues 68 to 88; sequence VFLSGISESWIAIGLTLGAWI. The Cytoplasmic segment spans residues 89-126; it reads NWKLVAGRLRVHTEYNNNALTLPDYFTGRFEDKSRILR. A helical transmembrane segment spans residues 127–147; the sequence is IISALVILLFFTIYCASGIVA. The Periplasmic portion of the chain corresponds to 148-162; the sequence is GARLFESTFGMSYET. The segment at 151–162 is hydrophilic; that stretch reads LFESTFGMSYET. Residues 163–183 traverse the membrane as a helical segment; the sequence is ALWAGAAATILYTFIGGFLAV. Residues 184 to 192 are Cytoplasmic-facing; it reads SWTDTVQAS. Positions 185 to 189 are hydrophilic; sequence WTDTV. A helical membrane pass occupies residues 193–213; that stretch reads LMIFALILTPVIVIISVGGFG. Hydrophilic stretches follow at residues 214-231, 249-274, and 296-319; these read DSLE…DMLK, FGQP…RRIS, and FNDH…ELAQ. Topologically, residues 214 to 234 are periplasmic; that stretch reads DSLEVIKQKSIENVDMLKGLN. The chain crosses the membrane as a helical span at residues 235–255; the sequence is FVAIISLMGWGLGYFGQPHIL. Residues 256–275 lie on the Cytoplasmic side of the membrane; the sequence is ARFMAADSHHSIVHARRISM. The helical transmembrane segment at 276–296 threads the bilayer; the sequence is TWMILCLAGAVAVGFFGIAYF. Residues 297–319 lie on the Periplasmic side of the membrane; sequence NDHPALAGAVNQNAERVFIELAQ. The chain crosses the membrane as a helical span at residues 320–340; it reads ILFNPWIAGILLSAILAAVMS. Residues 341 to 370 lie on the Cytoplasmic side of the membrane; it reads TLSCQLLVCSSAITEDLYKAFLRKHASQKE. Positions 341-370 are hydrophilic; it reads TLSCQLLVCSSAITEDLYKAFLRKHASQKE. A helical membrane pass occupies residues 371 to 391; the sequence is LVWVGRVMVLVVALVAIALAA. The Periplasmic segment spans residues 392-397; that stretch reads NPENRV. Positions 392 to 397 are hydrophilic; that stretch reads NPENRV. Residues 398-418 form a helical membrane-spanning segment; the sequence is LGLVSYAWAGFGAAFGPVVLF. Residues 419 to 427 are Cytoplasmic-facing; the sequence is SVMWSRMTR. Hydrophilic stretches follow at residues 424–430 and 446–448; these read RMTRNGA and QFG. 2 helical membrane-spanning segments follow: residues 428-448 and 449-469; these read NGAL…KQFG and WLGL…IVVF. At 470 to 502 the chain is on the cytoplasmic side; it reads SLLGKAPSAAMQKRFAEADAHYHSAPPSRLQES. Residues 476–502 form a hydrophilic region; sequence PSAAMQKRFAEADAHYHSAPPSRLQES.

Belongs to the sodium:solute symporter (SSF) (TC 2.A.21) family. Has been isolated from inner membrane preparations as a homodimer.

The protein localises to the cell inner membrane. The enzyme catalyses L-proline(in) + Na(+)(in) = L-proline(out) + Na(+)(out). Activity is stimulated by phosphatidylethanolamine and phosphatidylglycerol, but not by phosphatidylcholine and cardiolipin. Proline uptake is inhibited by the sulfhydryl reagent N-ethylmaleimide (NEM). Proline, in the presence of Na(+) or Li(+), protects the carrier functions from NEM-inactivation. Catalyzes the sodium-dependent uptake of extracellular L-proline. This protein is also capable of using lithium as the transport cation. Also catalyzes the uptake of propionate. The protein is Sodium/proline symporter (putP) of Escherichia coli (strain K12).